The sequence spans 101 residues: Small ribosomal subunit protein uS14 (101 aa).

The protein belongs to the universal ribosomal protein uS14 family. As to quaternary structure, part of the 30S ribosomal subunit. Contacts proteins S3 and S10.

Its function is as follows. Binds 16S rRNA, required for the assembly of 30S particles and may also be responsible for determining the conformation of the 16S rRNA at the A site. The polypeptide is Small ribosomal subunit protein uS14 (Escherichia coli O8 (strain IAI1)).